The primary structure comprises 437 residues: 3-phosphoshikimate 1-carboxyvinyltransferase (437 aa).

Residues Lys21, Ser22, and Arg26 each contribute to the 3-phosphoshikimate site. Lys21 contacts phosphoenolpyruvate. Phosphoenolpyruvate is bound by residues Gly101 and Arg129. The 3-phosphoshikimate site is built by Ser172, Ser173, Gln174, Ser200, Asp314, and Lys341. A phosphoenolpyruvate-binding site is contributed by Gln174. The active-site Proton acceptor is Asp314. Residues Arg345, Arg388, and Lys414 each coordinate phosphoenolpyruvate.

The protein belongs to the EPSP synthase family. As to quaternary structure, monomer.

Its subcellular location is the cytoplasm. The enzyme catalyses 3-phosphoshikimate + phosphoenolpyruvate = 5-O-(1-carboxyvinyl)-3-phosphoshikimate + phosphate. It functions in the pathway metabolic intermediate biosynthesis; chorismate biosynthesis; chorismate from D-erythrose 4-phosphate and phosphoenolpyruvate: step 6/7. Catalyzes the transfer of the enolpyruvyl moiety of phosphoenolpyruvate (PEP) to the 5-hydroxyl of shikimate-3-phosphate (S3P) to produce enolpyruvyl shikimate-3-phosphate and inorganic phosphate. The chain is 3-phosphoshikimate 1-carboxyvinyltransferase from Clostridioides difficile (strain 630) (Peptoclostridium difficile).